A 101-amino-acid polypeptide reads, in one-letter code: Small ribosomal subunit protein uS14A (101 aa).

Positions 29–73 are disordered; sequence AIISSPSTPADARAAAQSELNRQPRDASPVRVRNRDAVDGRPRGH. Residues 61-70 are compositionally biased toward basic and acidic residues; it reads RNRDAVDGRP.

The protein belongs to the universal ribosomal protein uS14 family. As to quaternary structure, part of the 30S ribosomal subunit. Contacts proteins S3 and S10.

Its function is as follows. Binds 16S rRNA, required for the assembly of 30S particles and may also be responsible for determining the conformation of the 16S rRNA at the A site. The protein is Small ribosomal subunit protein uS14A of Mycolicibacterium gilvum (strain PYR-GCK) (Mycobacterium gilvum (strain PYR-GCK)).